A 425-amino-acid polypeptide reads, in one-letter code: Intermediate conductance calcium-activated potassium channel protein 4 (425 aa).

Residues 30–50 (LVLAGTGIGLMVLHAEMLWFL) traverse the membrane as a helical segment. Residues 59-79 (LLVKCLITLSTAFLLCLIVVF) form a helical membrane-spanning segment. The helical transmembrane segment at 105-121 (VAQILLELLVCGVHPVP) threads the bilayer. The helical transmembrane segment at 141–161 (GFLGEGEALLSLAMLLRLYLV) threads the bilayer. Residues 205 to 225 (LLLGLTLGLWLTTAWVLSVAE) traverse the membrane as a helical segment. The pore-forming intramembrane region spans 239 to 259 (LWLIPITFLTIGYGDVVPGTL). A helical transmembrane segment spans residues 263–283 (IVCLCTGVMGVCCTALLVAVV). Residues 284–345 (ARKLEFNKAE…RRHQRKMLAA (62 aa)) form a calmodulin-binding region. His-356 bears the Phosphohistidine mark.

The protein belongs to the potassium channel KCNN family. KCa3.1/KCNN4 subfamily. Homodimer. Homotetramer. Heterotetramer of potassium channel proteins. Interacts with MTMR6; this interaction leads to selective dephosphorylation of PI(3)P in a lipid microdomain adjacent to KCNN4, resulting in a decrease of intermediate conductance calcium-activated potassium channel activity. Interacts (via the C-tail domain) with CALM1; the calmodulin binding is constitutive, does not require calcium and mediates calcium-dependent gating and four calmodulin molecules bind to one channel tetramer. In terms of processing, phosphorylation at His-356 by NDKB activates the intermediate conductance calcium-activated potassium channel activity, and conversely it's dephosphorylation by PHPT1 inhibits this activity.

It is found in the cell membrane. It localises to the cell projection. The protein localises to the ruffle membrane. The catalysed reaction is K(+)(in) = K(+)(out). Functionally, intermediate conductance calcium-activated potassium channel that mediates the voltage-independent transmembrane transfer of potassium across the cell membrane through a constitutive interaction with calmodulin which binds the intracellular calcium allowing its opening. The current is characterized by a voltage-independent activation, an intracellular calcium concentration increase-dependent activation and a single-channel conductance of about 25 picosiemens. Also presents an inwardly rectifying current, thus reducing its already small outward conductance of potassium ions, which is particularly the case when the membrane potential displays positive values, above + 20 mV. Controls calcium influx during vascular contractility by being responsible of membrane hyperpolarization induced by vasoactive factors in proliferative vascular smooth muscle cell types. Following calcium influx, the consecutive activation of KCNN4 channel leads to a hyperpolarization of the cell membrane potential and hence an increase of the electrical driving force for further calcium influx promoting sustained calcium entry in response to stimulation with chemotactic peptides. Required for maximal calcium influx and proliferation during the reactivation of naive T-cells. Plays a role in the late stages of EGF-induced macropinocytosis through activation by PI(3)P. The polypeptide is Intermediate conductance calcium-activated potassium channel protein 4 (Rattus norvegicus (Rat)).